Consider the following 396-residue polypeptide: Mitogen-activated protein kinase mpkC (396 aa).

The Protein kinase domain occupies 20–299; the sequence is YSDLQPVGLG…AAKALEHPYL (280 aa). Residues 26–34 and K49 contribute to the ATP site; that span reads VGLGAFGLV. Catalysis depends on D141, which acts as the Proton acceptor. At T171 the chain carries Phosphothreonine. The TXY motif lies at 171-173; sequence TGY. A Phosphotyrosine modification is found at Y173.

Belongs to the protein kinase superfamily. Ser/Thr protein kinase family. MAP kinase subfamily. HOG1 sub-subfamily. The cofactor is Mg(2+). In terms of processing, dually phosphorylated on Thr-171 and Tyr-173, which activates the enzyme.

It catalyses the reaction L-seryl-[protein] + ATP = O-phospho-L-seryl-[protein] + ADP + H(+). The catalysed reaction is L-threonyl-[protein] + ATP = O-phospho-L-threonyl-[protein] + ADP + H(+). Its activity is regulated as follows. Activated by tyrosine and threonine phosphorylation. In terms of biological role, mitogen-activated protein kinase required for growth on media where sorbitol or mannitol is the sole carbon source. The polypeptide is Mitogen-activated protein kinase mpkC (mpkC) (Aspergillus niger (strain ATCC MYA-4892 / CBS 513.88 / FGSC A1513)).